Reading from the N-terminus, the 313-residue chain is MTPRAIICLAGPTAAGKSASTLALAQRWPLEIINVDSATIYRGMDIGTAKPSAAERAQVPQHLLDIRDPAQSYSAAEFRADALRLIAEIHARGRIPLLAGGTMLYYKALREGLDDLPQADPALRAELEARAARLGWPALHAELALLDPATAARLSPNDSQRIQRALEICRLAGQPMSALLQGERRGDAPSPYRYVTLSLEPSERAALHARIAQRFDAMLAAGLVEEVRGLHARPDLHPGLPSVRCVGYRQMWSYLDGDIDLDTAREQGVAATRQLAKRQLTWLRAQPERVIIDCLAGDAVARTVDAMARALPD.

11–18 is a binding site for ATP; that stretch reads GPTAAGKS. Residue 13 to 18 participates in substrate binding; it reads TAAGKS. Interaction with substrate tRNA stretches follow at residues 36–39, 160–164, and 244–249; these read DSAT, QRIQR, and RCVGYR.

This sequence belongs to the IPP transferase family. In terms of assembly, monomer. Mg(2+) serves as cofactor.

It carries out the reaction adenosine(37) in tRNA + dimethylallyl diphosphate = N(6)-dimethylallyladenosine(37) in tRNA + diphosphate. Its function is as follows. Catalyzes the transfer of a dimethylallyl group onto the adenine at position 37 in tRNAs that read codons beginning with uridine, leading to the formation of N6-(dimethylallyl)adenosine (i(6)A). The sequence is that of tRNA dimethylallyltransferase from Bordetella pertussis (strain Tohama I / ATCC BAA-589 / NCTC 13251).